We begin with the raw amino-acid sequence, 124 residues long: MKRIHSLAGILLVLGLIQSSCRVLMQEADPSSSLEADSTLKDEPRELSNMKRHSEGTFSNDYSKYLEDRKAQEFVRWLMNNKRSGVAEKRHADGTFTSDVSSYLKDQAIKDFVDRLKAGQVRRE.

The first 25 residues, 1 to 25 (MKRIHSLAGILLVLGLIQSSCRVLM), serve as a signal peptide directing secretion. The tract at residues 28–54 (ADPSSSLEADSTLKDEPRELSNMKRHS) is disordered. Residues 38-54 (STLKDEPRELSNMKRHS) show a composition bias toward basic and acidic residues. A propeptide spanning residues 84-88 (SGVAE) is cleaved from the precursor.

Belongs to the glucagon family.

It localises to the secreted. Glucagon plays a key role in glucose metabolism and homeostasis. Regulates blood glucose by increasing gluconeogenesis and decreasing glycolysis. The sequence is that of Glucagon-1 (gcg1) from Lophius americanus (American angler).